We begin with the raw amino-acid sequence, 173 residues long: ATP synthase subunit b (173 aa).

Residues 18 to 38 (IFWSLVILIIVAVFFYKFFLP) form a helical membrane-spanning segment.

This sequence belongs to the ATPase B chain family. F-type ATPases have 2 components, F(1) - the catalytic core - and F(0) - the membrane proton channel. F(1) has five subunits: alpha(3), beta(3), gamma(1), delta(1), epsilon(1). F(0) has three main subunits: a(1), b(2) and c(10-14). The alpha and beta chains form an alternating ring which encloses part of the gamma chain. F(1) is attached to F(0) by a central stalk formed by the gamma and epsilon chains, while a peripheral stalk is formed by the delta and b chains.

The protein resides in the cell membrane. Functionally, f(1)F(0) ATP synthase produces ATP from ADP in the presence of a proton or sodium gradient. F-type ATPases consist of two structural domains, F(1) containing the extramembraneous catalytic core and F(0) containing the membrane proton channel, linked together by a central stalk and a peripheral stalk. During catalysis, ATP synthesis in the catalytic domain of F(1) is coupled via a rotary mechanism of the central stalk subunits to proton translocation. Its function is as follows. Component of the F(0) channel, it forms part of the peripheral stalk, linking F(1) to F(0). The polypeptide is ATP synthase subunit b (Bifidobacterium adolescentis (strain ATCC 15703 / DSM 20083 / NCTC 11814 / E194a)).